The chain runs to 516 residues: Cytochrome P450 6d1 (516 aa).

Position 461 (cysteine 461) interacts with heme.

Belongs to the cytochrome P450 family. The cofactor is heme.

It localises to the endoplasmic reticulum membrane. Its subcellular location is the microsome membrane. Metabolizes pyrethroid insecticides and other xenobiotics. This Musca domestica (House fly) protein is Cytochrome P450 6d1 (CYP6D1).